Reading from the N-terminus, the 472-residue chain is NADH-quinone oxidoreductase subunit N (472 aa).

The next 14 membrane-spanning stretches (helical) occupy residues 11–31 (AELS…FLPA), 43–63 (ILLT…LFGG), 67–87 (STPM…LVFL), 103–123 (GEFY…VSAG), 125–145 (FLLF…LVAF), 159–179 (FILS…MIYG), 200–220 (VLAL…VPFH), 234–254 (VSAY…MIIL), 265–285 (WSEI…LFAI), 293–313 (FMAF…LAGT), 318–338 (ASLV…FGVI), 362–384 (PKLT…FAGF), 401–421 (LIVF…LLIV), and 446–466 (LLVC…YQLL).

It belongs to the complex I subunit 2 family. NDH-1 is composed of 14 different subunits. Subunits NuoA, H, J, K, L, M, N constitute the membrane sector of the complex.

The protein localises to the cell inner membrane. The enzyme catalyses a quinone + NADH + 5 H(+)(in) = a quinol + NAD(+) + 4 H(+)(out). In terms of biological role, NDH-1 shuttles electrons from NADH, via FMN and iron-sulfur (Fe-S) centers, to quinones in the respiratory chain. The immediate electron acceptor for the enzyme in this species is believed to be a menaquinone. Couples the redox reaction to proton translocation (for every two electrons transferred, four hydrogen ions are translocated across the cytoplasmic membrane), and thus conserves the redox energy in a proton gradient. The sequence is that of NADH-quinone oxidoreductase subunit N from Phocaeicola vulgatus (strain ATCC 8482 / DSM 1447 / JCM 5826 / CCUG 4940 / NBRC 14291 / NCTC 11154) (Bacteroides vulgatus).